Consider the following 435-residue polypeptide: Glutamyl-tRNA reductase (435 aa).

Residues 49–52 (TCNR), Ser-118, 123–125 (EPQ), and Gln-129 each bind substrate. The active-site Nucleophile is the Cys-50. 203–208 (GAGETI) is an NADP(+) binding site.

Belongs to the glutamyl-tRNA reductase family. Homodimer.

It catalyses the reaction (S)-4-amino-5-oxopentanoate + tRNA(Glu) + NADP(+) = L-glutamyl-tRNA(Glu) + NADPH + H(+). It participates in porphyrin-containing compound metabolism; protoporphyrin-IX biosynthesis; 5-aminolevulinate from L-glutamyl-tRNA(Glu): step 1/2. Its function is as follows. Catalyzes the NADPH-dependent reduction of glutamyl-tRNA(Glu) to glutamate 1-semialdehyde (GSA). In Glaesserella parasuis serovar 5 (strain SH0165) (Haemophilus parasuis), this protein is Glutamyl-tRNA reductase.